The chain runs to 216 residues: MPMYGDLGNKLVQHAKRTQNLSHLPPYQTELVRAVAREIRDLDKDVASLLEPFQGSFDPSAEQATACTLLVNHLSMRRNKRCLLAYHRIRTDKLEELVWNGADILDLAGQTTGGPKGVTEGNEGGGTTSSLSPQEEDYFRQFGDLLALYKGQWTDIDLTGSLEPPRDLFIDVRVLKDAGEIQTEYGAINLTKNSQFYVRQGDVERLIVQGYLQKLG.

Residues 110 to 133 form a disordered region; that stretch reads QTTGGPKGVTEGNEGGGTTSSLSP. The span at 111 to 127 shows a compositional bias: gly residues; sequence TTGGPKGVTEGNEGGGT.

The protein belongs to the GINS1/PSF1 family. As to quaternary structure, component of the GINS complex which is a heterotetramer of div-26/sld5, drc-1/psf1, drc-2/psf2 and drc-3/psf3.

The protein resides in the nucleus. The GINS complex plays an essential role in the initiation of DNA replication. The polypeptide is DNA replication complex GINS protein psf1 (drc-1) (Neurospora crassa (strain ATCC 24698 / 74-OR23-1A / CBS 708.71 / DSM 1257 / FGSC 987)).